Consider the following 827-residue polypeptide: Multiple RNA-binding domain-containing protein 1 (827 aa).

One can recognise an RRM 1 domain in the interval 5–78 (SRIFVKNLPP…SRISVDIAKP (74 aa)). Disordered regions lie at residues 77-116 (KPIA…TAAA), 176-230 (AGLE…ATDD), and 256-299 (AASG…DPES). Residues 179–189 (EDGESDDEYED) are compositionally biased toward acidic residues. Composition is skewed to low complexity over residues 208–225 (APLA…PVSL) and 256–270 (AASG…STSV). A compositionally biased stretch (basic and acidic residues) spans 277-288 (KPEEHPAEDSRE). RRM domains are found at residues 308–384 (SRLF…PAAA), 489–560 (TTIL…KGPK), 599–682 (SSLF…ASHR), and 704–781 (TKLV…FAQA).

The protein belongs to the RRM MRD1 family.

It is found in the nucleus. Functionally, involved in pre-rRNA processing. The protein is Multiple RNA-binding domain-containing protein 1 (mrd-1) of Neurospora crassa (strain ATCC 24698 / 74-OR23-1A / CBS 708.71 / DSM 1257 / FGSC 987).